A 152-amino-acid chain; its full sequence is Large ribosomal subunit protein bL9 (152 aa).

Belongs to the bacterial ribosomal protein bL9 family.

Its function is as follows. Binds to the 23S rRNA. This Streptococcus thermophilus (strain CNRZ 1066) protein is Large ribosomal subunit protein bL9.